The sequence spans 201 residues: dTTP/UTP pyrophosphatase (201 aa).

Residue D73 is the Proton acceptor of the active site.

Belongs to the Maf family. YhdE subfamily. A divalent metal cation is required as a cofactor.

Its subcellular location is the cytoplasm. It catalyses the reaction dTTP + H2O = dTMP + diphosphate + H(+). The enzyme catalyses UTP + H2O = UMP + diphosphate + H(+). Its function is as follows. Nucleoside triphosphate pyrophosphatase that hydrolyzes dTTP and UTP. May have a dual role in cell division arrest and in preventing the incorporation of modified nucleotides into cellular nucleic acids. The sequence is that of dTTP/UTP pyrophosphatase from Pseudomonas aeruginosa (strain ATCC 15692 / DSM 22644 / CIP 104116 / JCM 14847 / LMG 12228 / 1C / PRS 101 / PAO1).